The following is a 241-amino-acid chain: Probable transcriptional regulatory protein Reut_A2522 (241 aa).

The protein belongs to the TACO1 family.

It is found in the cytoplasm. The protein is Probable transcriptional regulatory protein Reut_A2522 of Cupriavidus pinatubonensis (strain JMP 134 / LMG 1197) (Cupriavidus necator (strain JMP 134)).